A 40-amino-acid polypeptide reads, in one-letter code: Snaclec tokaracetin subunit alpha (40 aa).

Residues 1–40 form the C-type lectin domain; it reads DCPSGWSSFKQYCYKPFKQLKTWEDAERFCLEQVKGAHLV. Cysteines 2 and 13 form a disulfide.

It belongs to the snaclec family. As to quaternary structure, heterodimer of subunits alpha and beta; disulfide-linked. In terms of tissue distribution, expressed by the venom gland.

Its subcellular location is the secreted. Platelet antagonist that specifically and reversibly binds to a site on platelet glycoprotein Ibalpha (GP1BA) close to or identical with the site for vWF binding. It inhibits the binding of vWF to platelets and vWF-dependent shear-induced platelet aggregation. This Protobothrops tokarensis (Tokara habu) protein is Snaclec tokaracetin subunit alpha.